Reading from the N-terminus, the 106-residue chain is uncharacterized protein (106 aa).

A run of 2 helical transmembrane segments spans residues 17–37 (AGLLMTISLAKSFSFAIAVLV) and 55–75 (FSSSYVFLYFIVICRLRFMIF).

It is found in the membrane. This is an uncharacterized protein from Saccharomyces cerevisiae (strain ATCC 204508 / S288c) (Baker's yeast).